The sequence spans 496 residues: Glycylpeptide N-tetradecanoyltransferase 1 (496 aa).

The tract at residues 1 to 82 is disordered; it reads MADESETAVK…SAQDQPVKMN (82 aa). Residues Ser31 and Ser47 each carry the phosphoserine modification. Over residues 55-66 the composition is skewed to basic residues; the sequence is KKKKKKQKKKKE. Ser83 carries the post-translational modification Phosphoserine. Positions 118, 119, 120, 247, 248, 249, 250, 256, 258, 259, and 260 each coordinate tetradecanoyl-CoA.

This sequence belongs to the NMT family.

It localises to the cytoplasm. The protein resides in the cytosol. The protein localises to the membrane. The enzyme catalyses N-terminal glycyl-[protein] + tetradecanoyl-CoA = N-tetradecanoylglycyl-[protein] + CoA + H(+). The catalysed reaction is N-terminal glycyl-L-lysyl-[protein] + tetradecanoyl-CoA = N-terminal glycyl-(N(6)-tetradecanoyl)-L-lysyl-[protein] + CoA + H(+). In terms of biological role, adds a myristoyl group to the N-terminal glycine residue of certain cellular and viral proteins. Also able to mediate N-terminal lysine myristoylation of proteins: catalyzes myristoylation of ARF6 on both 'Gly-2' and 'Lys-3'. Lysine myristoylation is required to maintain ARF6 on membranes during the GTPase cycle. The sequence is that of Glycylpeptide N-tetradecanoyltransferase 1 (NMT1) from Pongo abelii (Sumatran orangutan).